The primary structure comprises 655 residues: RNA-binding protein EWS (655 aa).

Residues Met1–Phe285 are EAD (Gln/Pro/Thr-rich). Repeat copies occupy residues Thr8 to Gln16, Gly17 to Gln27, Gly28 to Gln34, Ala35 to Gly42, Thr43 to Val50, Ser51 to Ala59, Thr60 to Thr68, Ser69 to Thr75, Gly76 to Gln84, Ala85 to Gln91, Gly92 to Ala110, Ser111 to Thr116, Ala117 to Pro125, Thr126 to Gly156, Gly157 to Leu163, Gly164 to Tyr170, Ser171 to Gly177, Ser178 to Pro188, Ser189 to Thr193, Ser194 to Thr201, Ser202 to Ser206, Ser207 to Asn212, Thr213 to Ser218, Ser219 to Ser224, Ser225 to Ser230, Ser231 to Thr238, Ser239 to Gly245, Ser246 to Ser252, Gln253 to Ser259, Ser260 to Gly276, and Val277 to Phe285. Residues Thr8–Phe285 are 31 X approximate tandem repeats. Positions Gln121–Pro350 are disordered. Composition is skewed to polar residues over residues Tyr127 to Thr137 and Ala146 to Tyr172. Residues Pro192 to Ser266 show a composition bias toward low complexity. Residues Gln256 to Phe285 form the IQ domain. Phosphoserine; by PKC is present on Ser266. Residues Arg300, Arg302, Arg304, Arg309, Arg314, Arg317, and Arg321 each carry the asymmetric dimethylarginine modification. Residues Asp308–Lys334 show a composition bias toward gly residues. The span at Pro335–Pro350 shows a compositional bias: low complexity. Positions Ser360–Lys446 constitute an RRM domain. Lys438 is subject to N6-acetyllysine. 2 disordered regions span residues Lys447–Pro524 and Ala544–Tyr655. Asymmetric dimethylarginine is present on residues Arg454 and Arg463. Arg470 is modified (asymmetric dimethylarginine; alternate). The residue at position 470 (Arg470) is an Omega-N-methylarginine; alternate. The span at Gly471–Arg489 shows a compositional bias: gly residues. Residue Arg485 is modified to Omega-N-methylarginine. Arg489 carries the post-translational modification Asymmetric dimethylarginine; by PRMT8. An asymmetric dimethylarginine mark is found at Arg493, Arg499, and Arg502. Arg505 is modified (asymmetric dimethylarginine; alternate). Arg505 is modified (omega-N-methylarginine; alternate). The RanBP2-type zinc-finger motif lies at Arg517 to Glu548. Residues Phe550 to Gly559 are compositionally biased toward pro residues. An asymmetric dimethylarginine mark is found at Arg562 and Arg564. Positions Gly565–Gly590 are enriched in gly residues. Arg571 is modified (asymmetric dimethylarginine; alternate; by PRMT8). Residue Arg571 is modified to Omega-N-methylarginine; alternate; by PRMT8. Asymmetric dimethylarginine occurs at positions 574, 580, 588, and 591. The segment covering Arg591–Asp605 has biased composition (basic and acidic residues). Arg595 is subject to Asymmetric dimethylarginine; alternate; by PRMT8. An Omega-N-methylarginine; alternate; by PRMT8 modification is found at Arg595. The residue at position 599 (Arg599) is an Asymmetric dimethylarginine. Residue Arg602 is modified to Asymmetric dimethylarginine; by PRMT8. Position 606 is an asymmetric dimethylarginine; alternate; by PRMT8 (Arg606). Omega-N-methylarginine; alternate; by PRMT8 is present on Arg606. Over residues Arg606–Pro617 the composition is skewed to gly residues. Asymmetric dimethylarginine; alternate is present on Arg614. Arg614 is modified (omega-N-methylarginine; alternate). Asymmetric dimethylarginine is present on residues Arg632 and Arg635. Positions Pro638–Tyr655 match the Nuclear localization signal motif. The segment covering Lys640–Tyr655 has biased composition (basic and acidic residues).

The protein belongs to the RRM TET family. Binds RNA, POLR2C, SF1 and calmodulin. Interacts with PTK2B and TDRD3. Forms a complex with REC8, PRDM9, SYCP3 and SYCP1; complex formation is dependent of phosphorylated form of REC8 and requires PRDM9 bound to hotspot DNA; EWSR1 joins PRDM9 with the chromosomal axis through REC8. In terms of processing, phosphorylated; calmodulin-binding inhibits phosphorylation of Ser-266. Highly methylated on arginine residues. Methylation is mediated by PRMT1 and, at lower level by PRMT8.

It localises to the nucleus. It is found in the cytoplasm. The protein localises to the cell membrane. Its function is as follows. Binds to ssRNA containing the consensus sequence 5'-AGGUAA-3'. Might function as a transcriptional repressor. The protein is RNA-binding protein EWS (Ewsr1) of Mus musculus (Mouse).